The following is an 89-amino-acid chain: Small ribosomal subunit protein uS17 (89 aa).

The protein belongs to the universal ribosomal protein uS17 family. As to quaternary structure, part of the 30S ribosomal subunit.

Functionally, one of the primary rRNA binding proteins, it binds specifically to the 5'-end of 16S ribosomal RNA. The chain is Small ribosomal subunit protein uS17 from Chlorobium phaeobacteroides (strain BS1).